The chain runs to 851 residues: Phosphatidate phosphatase LPIN3 (851 aa).

The interval 1-108 (MNYVGQLAET…VPPGLCTSPI (108 aa)) is N-LIP. Disordered stretches follow at residues 114–385 (SGFP…YLDD) and 400–432 (QSDSGLGARRWSEPSSQKSLRDPNPEHEPEPTL). A compositionally biased stretch (basic residues) spans 140–151 (GRRKRRRRRKPK). The Nuclear localization signal motif lies at 141–148 (RRKRRRRR). T159 carries the post-translational modification Phosphothreonine. A phosphoserine mark is found at S161, S162, and S224. A compositionally biased stretch (low complexity) spans 268 to 286 (GRAGATSPPRGGPSTPSTS). Positions 418–429 (SLRDPNPEHEPE) are enriched in basic and acidic residues. S463 is modified (phosphoserine). Positions 542–559 (SAQKEKTAAKEQQGEKTE) are enriched in basic and acidic residues. The segment at 542 to 591 (SAQKEKTAAKEQQGEKTEVLSSDDDAPDSPVILEIPSLPPSTPPSTPTYK) is disordered. Over residues 578 to 587 (SLPPSTPPST) the composition is skewed to pro residues. The segment at 590 to 792 (YKKSLRLSSD…RIFTVNPRGE (203 aa)) is C-LIP. Positions 644-648 (DIDGT) match the DXDXT motif motif. Positions 655–659 (LGHIL) match the LXXIL motif motif.

Belongs to the lipin family. Requires Mg(2+) as cofactor. Significant expression in intestine and other regions of the gastrointestinal tract.

The protein localises to the nucleus. It carries out the reaction a 1,2-diacyl-sn-glycero-3-phosphate + H2O = a 1,2-diacyl-sn-glycerol + phosphate. Its activity is regulated as follows. Inhibited by N-ethylmaleimide. Functionally, magnesium-dependent phosphatidate phosphatase enzyme which catalyzes the conversion of phosphatidic acid to diacylglycerol during triglyceride, phosphatidylcholine and phosphatidylethanolamine biosynthesis therefore regulates fatty acid metabolism. This is Phosphatidate phosphatase LPIN3 from Homo sapiens (Human).